A 411-amino-acid chain; its full sequence is NADH-quinone oxidoreductase subunit D (411 aa).

This sequence belongs to the complex I 49 kDa subunit family. NDH-1 is composed of 14 different subunits. Subunits NuoB, C, D, E, F, and G constitute the peripheral sector of the complex.

The protein resides in the cell inner membrane. It carries out the reaction a quinone + NADH + 5 H(+)(in) = a quinol + NAD(+) + 4 H(+)(out). Functionally, NDH-1 shuttles electrons from NADH, via FMN and iron-sulfur (Fe-S) centers, to quinones in the respiratory chain. The immediate electron acceptor for the enzyme in this species is believed to be ubiquinone. Couples the redox reaction to proton translocation (for every two electrons transferred, four hydrogen ions are translocated across the cytoplasmic membrane), and thus conserves the redox energy in a proton gradient. The chain is NADH-quinone oxidoreductase subunit D from Phenylobacterium zucineum (strain HLK1).